The following is a 460-amino-acid chain: UDP-N-acetylmuramoylalanine--D-glutamate ligase (460 aa).

117-123 serves as a coordination point for ATP; sequence GTNGKTT.

The protein belongs to the MurCDEF family.

The protein resides in the cytoplasm. It catalyses the reaction UDP-N-acetyl-alpha-D-muramoyl-L-alanine + D-glutamate + ATP = UDP-N-acetyl-alpha-D-muramoyl-L-alanyl-D-glutamate + ADP + phosphate + H(+). It participates in cell wall biogenesis; peptidoglycan biosynthesis. In terms of biological role, cell wall formation. Catalyzes the addition of glutamate to the nucleotide precursor UDP-N-acetylmuramoyl-L-alanine (UMA). The chain is UDP-N-acetylmuramoylalanine--D-glutamate ligase from Prochlorococcus marinus (strain MIT 9313).